The following is a 398-amino-acid chain: G2/mitotic-specific cyclin-B2 (398 aa).

2 disordered regions span residues Met-1–Ser-26 and Ala-53–Ala-76. Thr-8 bears the Phosphothreonine mark. Over residues Thr-8 to Lys-23 the composition is skewed to polar residues. A compositionally biased stretch (low complexity) spans Asn-55–Asn-69. 2 positions are modified to phosphoserine: Ser-77 and Ser-92. Thr-94 is subject to Phosphothreonine. Residues Ser-99, Ser-392, and Ser-398 each carry the phosphoserine modification.

This sequence belongs to the cyclin family. Cyclin AB subfamily. In terms of assembly, interacts with the CDK1 protein kinase to form a serine/threonine kinase holoenzyme complex also known as maturation promoting factor (MPF). The cyclin subunit imparts substrate specificity to the complex.

Its function is as follows. Essential for the control of the cell cycle at the G2/M (mitosis) transition. The protein is G2/mitotic-specific cyclin-B2 (CCNB2) of Bos taurus (Bovine).